Here is a 256-residue protein sequence, read N- to C-terminus: Alcohol dehydrogenase (256 aa).

NAD(+) is bound at residue Phe-12–Leu-35. Ser-140 lines the substrate pocket. Tyr-153 acts as the Proton acceptor in catalysis.

Belongs to the short-chain dehydrogenases/reductases (SDR) family. Homodimer.

It catalyses the reaction a primary alcohol + NAD(+) = an aldehyde + NADH + H(+). The enzyme catalyses a secondary alcohol + NAD(+) = a ketone + NADH + H(+). The sequence is that of Alcohol dehydrogenase (Adh) from Drosophila erecta (Fruit fly).